Here is a 206-residue protein sequence, read N- to C-terminus: Adenine phosphoribosyltransferase (206 aa).

The protein belongs to the purine/pyrimidine phosphoribosyltransferase family. Homodimer.

The protein localises to the cytoplasm. The catalysed reaction is AMP + diphosphate = 5-phospho-alpha-D-ribose 1-diphosphate + adenine. It participates in purine metabolism; AMP biosynthesis via salvage pathway; AMP from adenine: step 1/1. Its function is as follows. Catalyzes a salvage reaction resulting in the formation of AMP, that is energically less costly than de novo synthesis. The sequence is that of Adenine phosphoribosyltransferase from Burkholderia mallei (strain NCTC 10229).